A 240-amino-acid chain; its full sequence is MGHKPLYRQIADRIREQIARGELKPGDALPTESALQTEFGVSRVTVRQALRQLVEQQILESIQGSGTYVKEERVNYDIFQLTSFDEKLSDRHVDTHSEVLIFEVIPADDFLQQQLQITPQDRVWHVKRVRYRKQKPMALEETWMPLALFPDLTWQVMENSKYHFIEEVKKMVIDRSEQEIIPLMPTEEMSRLLNISQTKPILEKVSRGYLVDGRVFEYSRNAFNTDDYKFTLIAQRKSSR.

Positions Lys4–Glu72 constitute an HTH gntR-type domain. The segment at residues Glu32–Arg51 is a DNA-binding region (H-T-H motif).

Represses mngA and mngB. Regulates its own expression. This is Mannosyl-D-glycerate transport/metabolism system repressor MngR (mngR) from Escherichia coli (strain K12).